An 81-amino-acid polypeptide reads, in one-letter code: ATP synthase subunit c (81 aa).

The next 2 helical transmembrane spans lie at 7-27 (LVAI…AIGF) and 55-75 (IAGL…FFIF).

Belongs to the ATPase C chain family. In terms of assembly, F-type ATPases have 2 components, F(1) - the catalytic core - and F(0) - the membrane proton channel. F(1) has five subunits: alpha(3), beta(3), gamma(1), delta(1), epsilon(1). F(0) has three main subunits: a(1), b(2) and c(10-14). The alpha and beta chains form an alternating ring which encloses part of the gamma chain. F(1) is attached to F(0) by a central stalk formed by the gamma and epsilon chains, while a peripheral stalk is formed by the delta and b chains.

Its subcellular location is the cell inner membrane. Its function is as follows. F(1)F(0) ATP synthase produces ATP from ADP in the presence of a proton or sodium gradient. F-type ATPases consist of two structural domains, F(1) containing the extramembraneous catalytic core and F(0) containing the membrane proton channel, linked together by a central stalk and a peripheral stalk. During catalysis, ATP synthesis in the catalytic domain of F(1) is coupled via a rotary mechanism of the central stalk subunits to proton translocation. In terms of biological role, key component of the F(0) channel; it plays a direct role in translocation across the membrane. A homomeric c-ring of between 10-14 subunits forms the central stalk rotor element with the F(1) delta and epsilon subunits. This is ATP synthase subunit c from Acinetobacter baumannii (strain ACICU).